The primary structure comprises 179 residues: MAKTAMAYKEKMKELSMLSLICSCFYPEPRNINIYTYDDMEVKQINKRASGQAFELILKPPSPISEAPRTLASPKKKDLSLEEIQKKLEAAEERRKSQEAQVLKQLAEKREHEREVLQKALEENNNFSKMAEEKLILKMEQIKENREANLAAIIERLQEKERHAAEVRRNKELQVELSG.

The tract at residues 1–26 (MAKTAMAYKEKMKELSMLSLICSCFY) is membrane attachment. A Phosphoserine modification is found at Ser-16. S-palmitoyl cysteine attachment occurs at residues Cys-22 and Cys-24. In terms of domain architecture, SLD spans 38 to 179 (DDMEVKQINK…NKELQVELSG (142 aa)). Residues 39 to 96 (DMEVKQINKRASGQAFELILKPPSPISEAPRTLASPKKKDLSLEEIQKKLEAAEERRK) are regulatory/phosphorylation domain. Residues Ser-50, Ser-62, Ser-73, and Ser-97 each carry the phosphoserine modification. Positions 75-179 (KKKDLSLEEI…NKELQVELSG (105 aa)) form a coiled coil.

The protein belongs to the stathmin family. As to quaternary structure, interacts with MAPK8. Interacts with ITM2C. Interacts with KIFBP. Interacts (via the N-terminal region) with CIB1 (via C-terminal region); the interaction is direct, occurs in a calcium-dependent manner and attenuates the neurite outgrowth inhibition of STMN2. Sumoylated. Post-translationally, phosphorylated mostly by MAPK8, but also by MAPK9 and MAPK10 in the developing brain cortex. In terms of processing, N-terminal palmitoylation promotes specific anchoring to the cytosolic leaflet of Golgi membranes and subsequent vesicular trafficking along dendrites and axons. Neuronal Stathmins are substrates for palmitoyltransferases ZDHHC3, ZDHHC7 and ZDHHC15. In terms of tissue distribution, neuron specific.

It is found in the cytoplasm. The protein localises to the perinuclear region. It localises to the cell projection. The protein resides in the growth cone. Its subcellular location is the membrane. It is found in the axon. The protein localises to the golgi apparatus. It localises to the endosome. The protein resides in the lamellipodium. Its function is as follows. Regulator of microtubule stability. When phosphorylated by MAPK8, stabilizes microtubules and consequently controls neurite length in cortical neurons. In the developing brain, negatively regulates the rate of exit from multipolar stage and retards radial migration from the ventricular zone. The polypeptide is Stathmin-2 (STMN2) (Homo sapiens (Human)).